The following is a 595-amino-acid chain: Elongation factor 4 (595 aa).

One can recognise a tr-type G domain in the interval 2–184 (ETIRNFSIIA…TITHNIPYPK (183 aa)). Residues 14-19 (DHGKST) and 131-134 (NKID) contribute to the GTP site.

Belongs to the TRAFAC class translation factor GTPase superfamily. Classic translation factor GTPase family. LepA subfamily.

Its subcellular location is the cell membrane. The catalysed reaction is GTP + H2O = GDP + phosphate + H(+). Its function is as follows. Required for accurate and efficient protein synthesis under certain stress conditions. May act as a fidelity factor of the translation reaction, by catalyzing a one-codon backward translocation of tRNAs on improperly translocated ribosomes. Back-translocation proceeds from a post-translocation (POST) complex to a pre-translocation (PRE) complex, thus giving elongation factor G a second chance to translocate the tRNAs correctly. Binds to ribosomes in a GTP-dependent manner. This Buchnera aphidicola subsp. Baizongia pistaciae (strain Bp) protein is Elongation factor 4.